Reading from the N-terminus, the 571-residue chain is Chaperonin GroEL 1 (571 aa).

Residues 29–32 (TLGP), K50, 86–90 (DGTTT), G416, and D498 contribute to the ATP site.

It belongs to the chaperonin (HSP60) family. Forms a cylinder of 14 subunits composed of two heptameric rings stacked back-to-back. Interacts with the co-chaperonin GroES.

Its subcellular location is the cytoplasm. The enzyme catalyses ATP + H2O + a folded polypeptide = ADP + phosphate + an unfolded polypeptide.. Its function is as follows. Together with its co-chaperonin GroES, plays an essential role in assisting protein folding. The GroEL-GroES system forms a nano-cage that allows encapsulation of the non-native substrate proteins and provides a physical environment optimized to promote and accelerate protein folding. In Rhodopirellula baltica (strain DSM 10527 / NCIMB 13988 / SH1), this protein is Chaperonin GroEL 1.